Consider the following 673-residue polypeptide: tRNA 5-methylaminomethyl-2-thiouridine biosynthesis bifunctional protein MnmC (673 aa).

Residues Met1–Pro245 form a tRNA (mnm(5)s(2)U34)-methyltransferase region. The interval Ile272–Val673 is FAD-dependent cmnm(5)s(2)U34 oxidoreductase.

It in the N-terminal section; belongs to the methyltransferase superfamily. tRNA (mnm(5)s(2)U34)-methyltransferase family. This sequence in the C-terminal section; belongs to the DAO family. FAD serves as cofactor.

It localises to the cytoplasm. It catalyses the reaction 5-aminomethyl-2-thiouridine(34) in tRNA + S-adenosyl-L-methionine = 5-methylaminomethyl-2-thiouridine(34) in tRNA + S-adenosyl-L-homocysteine + H(+). Catalyzes the last two steps in the biosynthesis of 5-methylaminomethyl-2-thiouridine (mnm(5)s(2)U) at the wobble position (U34) in tRNA. Catalyzes the FAD-dependent demodification of cmnm(5)s(2)U34 to nm(5)s(2)U34, followed by the transfer of a methyl group from S-adenosyl-L-methionine to nm(5)s(2)U34, to form mnm(5)s(2)U34. The protein is tRNA 5-methylaminomethyl-2-thiouridine biosynthesis bifunctional protein MnmC of Serratia proteamaculans (strain 568).